A 414-amino-acid polypeptide reads, in one-letter code: Serine hydroxymethyltransferase (414 aa).

(6S)-5,6,7,8-tetrahydrofolate contacts are provided by residues L121 and 125-127 (GHL). K230 carries the post-translational modification N6-(pyridoxal phosphate)lysine.

Belongs to the SHMT family. In terms of assembly, homodimer. Requires pyridoxal 5'-phosphate as cofactor.

The protein localises to the cytoplasm. The catalysed reaction is (6R)-5,10-methylene-5,6,7,8-tetrahydrofolate + glycine + H2O = (6S)-5,6,7,8-tetrahydrofolate + L-serine. Its pathway is one-carbon metabolism; tetrahydrofolate interconversion. It functions in the pathway amino-acid biosynthesis; glycine biosynthesis; glycine from L-serine: step 1/1. In terms of biological role, catalyzes the reversible interconversion of serine and glycine with tetrahydrofolate (THF) serving as the one-carbon carrier. This reaction serves as the major source of one-carbon groups required for the biosynthesis of purines, thymidylate, methionine, and other important biomolecules. Also exhibits THF-independent aldolase activity toward beta-hydroxyamino acids, producing glycine and aldehydes, via a retro-aldol mechanism. In Acidithiobacillus ferrooxidans (strain ATCC 23270 / DSM 14882 / CIP 104768 / NCIMB 8455) (Ferrobacillus ferrooxidans (strain ATCC 23270)), this protein is Serine hydroxymethyltransferase.